We begin with the raw amino-acid sequence, 577 residues long: Aspartate--tRNA(Asp) ligase (577 aa).

E172 contacts L-aspartate. Residues 196–199 (QLFK) are aspartate. R218 contributes to the L-aspartate binding site. ATP-binding positions include 218–220 (RDE) and Q227. L-aspartate is bound at residue H438. E473 lines the ATP pocket. R480 serves as a coordination point for L-aspartate. 525 to 528 (GFDR) contributes to the ATP binding site.

The protein belongs to the class-II aminoacyl-tRNA synthetase family. Type 1 subfamily. Homodimer.

The protein localises to the cytoplasm. The enzyme catalyses tRNA(Asp) + L-aspartate + ATP = L-aspartyl-tRNA(Asp) + AMP + diphosphate. In terms of biological role, catalyzes the attachment of L-aspartate to tRNA(Asp) in a two-step reaction: L-aspartate is first activated by ATP to form Asp-AMP and then transferred to the acceptor end of tRNA(Asp). Is specific for tRNA(Asp) since it cannot aspartylate tRNA(Asn). The chain is Aspartate--tRNA(Asp) ligase (aspS1) from Deinococcus radiodurans (strain ATCC 13939 / DSM 20539 / JCM 16871 / CCUG 27074 / LMG 4051 / NBRC 15346 / NCIMB 9279 / VKM B-1422 / R1).